A 193-amino-acid chain; its full sequence is Ion-translocating oxidoreductase complex subunit A (193 aa).

Helical transmembrane passes span 5–25, 39–59, 62–82, 102–122, 134–154, and 171–191; these read LLLFVGTVLVNNFVLVKFLGL, IGMGLATTFVLTLASVCAWMV, FILLPLGLVYLRTLAFILVIA, LLGIFLPLITTNCAVLGVALL, AVYGFSAAAGFSLVMVLFAAI, and SIALITAGLMSLAFMGFTGLV.

This sequence belongs to the NqrDE/RnfAE family. The complex is composed of six subunits: RnfA, RnfB, RnfC, RnfD, RnfE and RnfG.

The protein localises to the cell inner membrane. Functionally, part of a membrane-bound complex that couples electron transfer with translocation of ions across the membrane. The polypeptide is Ion-translocating oxidoreductase complex subunit A (Yersinia enterocolitica serotype O:8 / biotype 1B (strain NCTC 13174 / 8081)).